The sequence spans 400 residues: Glycine betaine/proline betaine transport system ATP-binding protein ProV (400 aa).

An ABC transporter domain is found at 29 to 265 (LSKEQILEKT…PANDYVRTFF (237 aa)). 61-68 (GLSGSGKS) contacts ATP. CBS domains follow at residues 280 to 341 (ARRS…GIEA) and 343 to 400 (LIDD…GNNG).

The protein belongs to the ABC transporter superfamily. The complex is composed of two ATP-binding proteins (ProV), two transmembrane proteins (ProW) and a solute-binding protein (ProX).

It localises to the cell inner membrane. Functionally, part of the ProU ABC transporter complex involved in glycine betaine and proline betaine uptake. Probably responsible for energy coupling to the transport system. This is Glycine betaine/proline betaine transport system ATP-binding protein ProV from Salmonella typhimurium (strain LT2 / SGSC1412 / ATCC 700720).